The sequence spans 66 residues: Kappa-flavitoxin (66 aa).

Intrachain disulfides connect cysteine 3/cysteine 21, cysteine 14/cysteine 42, cysteine 27/cysteine 31, cysteine 46/cysteine 58, and cysteine 59/cysteine 64.

Belongs to the three-finger toxin family. Long-chain subfamily. Kappa-neurotoxin sub-subfamily. In terms of assembly, homo- and heterodimer; non-covalently linked. In terms of tissue distribution, expressed by the venom gland.

The protein resides in the secreted. Functionally, postsynaptic neurotoxin that binds and inhibits neuronal nicotinic acetylcholine receptors (nAChR) with high affinity (IC(50)&lt;100 nM). Is a selective, and slowly reversible antagonist of alpha-3/CHRNA3-containing and some alpha-4/CHRNA4-containing AChRs. The polypeptide is Kappa-flavitoxin (Bungarus flaviceps flaviceps (Red-headed krait)).